We begin with the raw amino-acid sequence, 126 residues long: Protein HEAT-INDUCED TAS1 TARGET 3 (126 aa).

It belongs to the heat induced plant HTT protein family. Expressed in seedlings, leaves, stems, inflorescences and siliques.

The protein resides in the cytoplasm. It is found in the nucleus. Mediates both basal and acquired thermotolerance. The chain is Protein HEAT-INDUCED TAS1 TARGET 3 from Arabidopsis thaliana (Mouse-ear cress).